A 336-amino-acid chain; its full sequence is MARRRSQRVCASGPSMLNSARGAPELLRGTATNAEVSAAAAGATGSEELPPGDRGCRNGGGRGPAATTSSTGVAVGAEHGEDSLSRKPDPEPGRMDHHQPGTGRYQVLLNEEDNSESSAIEQPPTSNPAPQIVQAASSAPALETDSSPPPYSSITVEVPTTSDTEVYGEFYPVPPPYSVATSLPTYDEAEKAKAAAMAAAAAETSQRIQEEECPPRDDFSDADQLRVGNDGIFMLAFFMAFIFNWLGFCLSFCITNTIAGRYGAICGFGLSLIKWILIVRFSDYFTGYFNGQYWLWWIFLVLGLLLFFRGFVNYLKVRNMSESMAAAHRTRYFFLL.

2 disordered regions span residues 1–24 and 37–156; these read MARRRSQRVCASGPSMLNSARGAP and SAAA…SITV. Residues 1 to 231 lie on the Cytoplasmic side of the membrane; the sequence is MARRRSQRVC…ADQLRVGNDG (231 aa). Residues 37–48 show a composition bias toward low complexity; sequence SAAAAGATGSEE. The segment covering 78 to 99 has biased composition (basic and acidic residues); it reads EHGEDSLSRKPDPEPGRMDHHQ. The interaction with NEDD4 stretch occupies residues 148 to 151; that stretch reads PPPY. The PPxY motif 1 signature appears at 148–151; sequence PPPY. Phosphotyrosine; by SRC occurs at positions 151, 167, 171, and 177. Short sequence motifs (PPxY motif) lie at residues 174 to 177 and 184 to 186; these read PPPY and PTY. Residues 232-252 form a helical membrane-spanning segment; it reads IFMLAFFMAFIFNWLGFCLSF. Topologically, residues 253–257 are extracellular; that stretch reads CITNT. The helical transmembrane segment at 258–278 threads the bilayer; sequence IAGRYGAICGFGLSLIKWILI. Over 279–287 the chain is Cytoplasmic; it reads VRFSDYFTG. The helical transmembrane segment at 288-308 threads the bilayer; it reads YFNGQYWLWWIFLVLGLLLFF. The Extracellular segment spans residues 309 to 336; that stretch reads RGFVNYLKVRNMSESMAAAHRTRYFFLL.

In terms of assembly, forms heterodimers with NDFIP1. Interacts with HECT domain-containing E3 ubiquitin-protein ligases, including NEDD4. Interacts with NEDD4L. Interacts with PTEN. When phosphorylated at Tyr-167, interacts with SRC and LYN SH2 domain. May thus act as a scaffold that recruits SRC to NDFIP1, enhancing NDFIP1 phosphorylation. Interacts with SLC11A2/DMT1. May interact with phosphorylated EGFR. Interacts with KCNH2. Ubiquitinated by NEDD4 and ITCH. Also ubiquitinated by NEDD4L. Ubiquitination by NEDD4 or NEDD4L does not affect turnover. Post-translationally, undergoes transient tyrosine-phosphorylation following EGF stimulation, most probably catalyzed by SRC. Phosphorylation on Tyr-151, Tyr-171 and Tyr-177 are dependent on the phosphorylation on Tyr-167. Also phosphorylated by LYN and FYN. As to expression, expressed in brain, lung, heart, skeletal muscle, kidney, liver and placenta.

It is found in the endosome membrane. Its subcellular location is the golgi apparatus membrane. It localises to the endosome. The protein resides in the multivesicular body membrane. Activates HECT domain-containing E3 ubiquitin-protein ligases, including ITCH, NEDD4, NEDD4L, SMURF2, WWP1 and WWP2, and consequently modulates the stability of their targets. As a result, may control many cellular processes. Recruits ITCH, NEDD4 and SMURF2 to endosomal membranes. Negatively regulates KCNH2 potassium channel activity by decreasing its cell-surface expression and interfering with channel maturation through recruitment of NEDD4L to the Golgi apparatus and multivesicular body where it mediates KCNH2 degradation. May modulate EGFR signaling. Together with NDFIP1, limits the cytokine signaling and expansion of effector Th2 T-cells by promoting degradation of JAK1, probably by ITCH- and NEDD4L-mediated ubiquitination. The polypeptide is NEDD4 family-interacting protein 2 (NDFIP2) (Homo sapiens (Human)).